The primary structure comprises 589 residues: Complement component C8 beta chain (589 aa).

Positions 1–31 (MKTGAQVWRALAKSCLLCAALGCLHLPGARG) are cleaved as a signal peptide. Positions 32-53 (EKPDFFETNAVNGSLVRSRPVR) are excised as a propeptide. Asn43 is a glycosylation site (N-linked (GlcNAc...) asparagine). Residues 63-116 (DCQLSTWSSWTACDPCQKKRYRHTYLLRPSQFYGELCDFSDKEVEDCVTNRACR) enclose the TSP type-1 1 domain. 7 disulfide bridges follow: Cys64-Cys99, Cys75-Cys109, Cys78-Cys115, Cys121-Cys132, Cys126-Cys145, Cys139-Cys154, and Cys161-Cys199. C-linked (Man) tryptophan glycans are attached at residues Trp69 and Trp72. The region spanning 120 to 155 (RCEGFVCAQTGRCVNRRLLCNGDNDCGDQSDEANCR) is the LDL-receptor class A domain. Leu137, Asn140, Asp142, Asp144, Asp150, and Glu151 together coordinate Ca(2+). The region spanning 157-503 (IYKKCSQDME…EFQMEVSSCR (347 aa)) is the MACPF domain. Asn242 carries N-linked (GlcNAc...) asparagine glycosylation. Transmembrane regions (beta stranded) follow at residues 251 to 258 (SSFKFGFK), 261 to 268 (GLVEFGVR), 378 to 385 (AGGGFQIG), and 391 to 398 (VYLKLGVS). An intrachain disulfide couples Cys377 to Cys402. Residue Thr417 is modified to Phosphothreonine. Intrachain disulfides connect Cys502–Cys549, Cys504–Cys520, Cys507–Cys522, and Cys524–Cys533. The EGF-like domain maps to 504–534 (CAPCRNNGVPILKESRCECICPAGFQGVACE). Residues 544–587 (DGKWSCWSDWSPCSGGRKTRQRQCNNPAPQRGGSPCSGPASETL) enclose the TSP type-1 2 domain. Residues Trp550 and Trp553 are each glycosylated (C-linked (Man) tryptophan). Cys556 and Cys589 form a disulfide bridge. The disordered stretch occupies residues 556 to 589 (CSGGRKTRQRQCNNPAPQRGGSPCSGPASETLDC).

It belongs to the complement C6/C7/C8/C9 family. As to quaternary structure, heterotrimer of 3 chains: alpha (C8A), beta (C8B) and gamma (C8G); the alpha and gamma chains are disulfide bonded. Component of the membrane attack complex (MAC), composed of complement C5b, C6, C7, C8A, C8B, C8G and multiple copies of the pore-forming subunit C9. N-glycosylated; contains one or two bound glycans. Not O-glycosylated.

It is found in the secreted. The protein resides in the target cell membrane. Its activity is regulated as follows. Membrane attack complex (MAC) assembly is inhibited by CD59, thereby protecting self-cells from damage during complement activation. CD59 acts by binding to the beta-haipins of C8 (C8A and C8B), forming an intermolecular beta-sheet that prevents incorporation of the multiple copies of C9 required for complete formation of the osmolytic pore. MAC assembly is also inhibited by clusterin (CLU) chaperones that inhibit polymerization of C9. Its function is as follows. Component of the membrane attack complex (MAC), a multiprotein complex activated by the complement cascade, which inserts into a target cell membrane and forms a pore, leading to target cell membrane rupture and cell lysis. The MAC is initiated by proteolytic cleavage of C5 into complement C5b in response to the classical, alternative, lectin and GZMK complement pathways. The complement pathways consist in a cascade of proteins that leads to phagocytosis and breakdown of pathogens and signaling that strengthens the adaptive immune system. C8B, together with C8A and C8G, inserts into the target membrane, but does not form pores by itself. During MAC assembly, associates with C5b, C6 and C7 to form the C5b8 intermediate complex that inserts into the target membrane and traverses the bilayer increasing membrane rigidity. This is Complement component C8 beta chain (C8b) from Rattus norvegicus (Rat).